The primary structure comprises 434 residues: N-acylneuraminate cytidylyltransferase (434 aa).

The residue at position 1 (Met1) is an N-acetylmethionine. The interval 1-42 (MDSVEKGAATSVSNPRGRPSRGRPPKLQRNSRGGQGRGVEKP) is disordered. A BC1 motif motif is present at residues 15 to 31 (PRGRPSRGRPPKLQRNS). Arg37 and Arg52 each carry omega-N-methylarginine. 6 residues coordinate substrate: Arg52, Asn62, Arg111, Ser120, Ser122, and Gln143. Residues 200-206 (KRPRRQD) carry the BC2 motif motif. Arg201 is a catalytic residue. The BC3 motif motif lies at 269–276 (KEKLKEIK).

The protein belongs to the CMP-NeuNAc synthase family. Homotetramer; the active enzyme is formed by a dimer of dimers.

It localises to the nucleus. It carries out the reaction an N-acylneuraminate + CTP = a CMP-N-acyl-beta-neuraminate + diphosphate. It participates in amino-sugar metabolism; N-acetylneuraminate metabolism. In terms of biological role, catalyzes the activation of N-acetylneuraminic acid (NeuNAc) to cytidine 5'-monophosphate N-acetylneuraminic acid (CMP-NeuNAc), a substrate required for the addition of sialic acid. Has some activity toward NeuNAc, N-glycolylneuraminic acid (Neu5Gc) or 2-keto-3-deoxy-D-glycero-D-galacto-nononic acid (KDN). The polypeptide is N-acylneuraminate cytidylyltransferase (CMAS) (Bos taurus (Bovine)).